The primary structure comprises 219 residues: Cytidylate kinase (219 aa).

An ATP-binding site is contributed by 10–18 (GPAAAGKST).

The protein belongs to the cytidylate kinase family. Type 1 subfamily.

The protein localises to the cytoplasm. It carries out the reaction CMP + ATP = CDP + ADP. The catalysed reaction is dCMP + ATP = dCDP + ADP. This chain is Cytidylate kinase, found in Staphylococcus aureus (strain bovine RF122 / ET3-1).